Consider the following 262-residue polypeptide: GTP cyclohydrolase 1 type 2 homolog (262 aa).

Positions 64, 65, 103, 224, and 228 each coordinate a divalent metal cation.

It belongs to the GTP cyclohydrolase I type 2/NIF3 family. As to quaternary structure, homohexamer.

In Clostridium perfringens (strain 13 / Type A), this protein is GTP cyclohydrolase 1 type 2 homolog.